A 248-amino-acid chain; its full sequence is GPN-loop GTPase PAB0955 (248 aa).

Residue 10 to 15 (GSGKTT) participates in GTP binding. The short motif at 65-67 (GPN) is the Gly-Pro-Asn (GPN)-loop; involved in dimer interface element. GTP is bound by residues 165–168 (NKVD) and alanine 224.

It belongs to the GPN-loop GTPase family. Homodimer. Interacts with DNA topoisomerase VI subunit B (top6B), DNA primase DnaG and RF-C.

Small GTPase that may be involved in genome maintenance. Has weak intrinsic GTPase activity but displays no ATPase activity. The polypeptide is GPN-loop GTPase PAB0955 (Pyrococcus abyssi (strain GE5 / Orsay)).